The following is a 413-amino-acid chain: Cell division protein FtsA (413 aa).

It belongs to the FtsA/MreB family. In terms of assembly, self-interacts. Interacts with FtsZ.

The protein localises to the cell inner membrane. Its function is as follows. Cell division protein that is involved in the assembly of the Z ring. May serve as a membrane anchor for the Z ring. The polypeptide is Cell division protein FtsA (Borreliella burgdorferi (strain ATCC 35210 / DSM 4680 / CIP 102532 / B31) (Borrelia burgdorferi)).